The chain runs to 920 residues: Urea transporter 2 (920 aa).

The tract at residues 25 to 57 is disordered; that stretch reads FTSPSWPSTSPDTHPALPLLEMPEEKDLRSSNE. Positions 26 to 39 are enriched in low complexity; it reads TSPSWPSTSPDTHP. Residues 47–57 are compositionally biased toward basic and acidic residues; that stretch reads PEEKDLRSSNE. Helical transmembrane passes span 151–170, 176–196, 204–224, 233–253, 272–291, 302–322, 346–366, 370–390, and 392–412; these read WWTI…ALAL, AIAS…MAVF, WWLL…SSAL, LPVF…ATGH, ITWT…VGVG, GGVF…HAAI, WSYN…ALTW, LLAL…SNIM, and VVGV…FLLL. Positions 446 to 467 are disordered; the sequence is EKAPSGGGGEHPPTAGPKVEEG. Ser-477 is modified (phosphoserine). Helical transmembrane passes span 600 to 620, 638 to 658, 666 to 686, and 695 to 715; these read GILI…SGCL, AIAA…MAVF, WWLL…SSAL, and LPVF…ATGH. A glycan (N-linked (GlcNAc...) asparagine) is linked at Asn-733. A run of 4 helical transmembrane segments spans residues 764–784, 803–823, 832–852, and 854–874; these read GGIF…HAAI, IYFG…GGMF, LLAI…ANML, and VFGL…FLLL.

Belongs to the urea transporter family. Interacts with SNAPIN which enhances its urea transport activity. Epressed in the inner medulla of the kidney (at protein level). In terms of tissue distribution, expressed in the kidney.

The protein localises to the apical cell membrane. Its subcellular location is the cell membrane. It catalyses the reaction urea(in) = urea(out). Its activity is regulated as follows. Inhibited by phloretin. In terms of biological role, mediates the transport of urea driven by a concentration gradient across the cell membrane of the renal inner medullary collecting duct which is critical to the urinary concentrating mechanism. Functionally, mediates the transport of urea driven by a concentration gradient across the cell membrane of the kidney inner medullary collecting duct which is critical to the urinary concentrating mechanism. The sequence is that of Urea transporter 2 (SLC14A2) from Homo sapiens (Human).